A 120-amino-acid polypeptide reads, in one-letter code: Ribonuclease P protein component (120 aa).

This sequence belongs to the RnpA family. As to quaternary structure, consists of a catalytic RNA component (M1 or rnpB) and a protein subunit.

It carries out the reaction Endonucleolytic cleavage of RNA, removing 5'-extranucleotides from tRNA precursor.. RNaseP catalyzes the removal of the 5'-leader sequence from pre-tRNA to produce the mature 5'-terminus. It can also cleave other RNA substrates such as 4.5S RNA. The protein component plays an auxiliary but essential role in vivo by binding to the 5'-leader sequence and broadening the substrate specificity of the ribozyme. This Chelativorans sp. (strain BNC1) protein is Ribonuclease P protein component.